Here is a 438-residue protein sequence, read N- to C-terminus: Methyl-coenzyme M reductase subunit beta (438 aa).

Residue Tyr367 participates in coenzyme M binding. Gly369 is a coenzyme B binding site.

This sequence belongs to the methyl-coenzyme M reductase beta subunit family. In terms of assembly, MCR is a hexamer of two alpha, two beta, and two gamma chains, forming a dimer of heterotrimers. The cofactor is coenzyme F430.

It localises to the cytoplasm. It catalyses the reaction coenzyme B + methyl-coenzyme M = methane + coenzyme M-coenzyme B heterodisulfide. The protein operates within one-carbon metabolism; methyl-coenzyme M reduction; methane from methyl-coenzyme M: step 1/1. Its function is as follows. Component of the methyl-coenzyme M reductase (MCR) I that catalyzes the reductive cleavage of methyl-coenzyme M (CoM-S-CH3 or 2-(methylthio)ethanesulfonate) using coenzyme B (CoB or 7-mercaptoheptanoylthreonine phosphate) as reductant which results in the production of methane and the mixed heterodisulfide of CoB and CoM (CoM-S-S-CoB). This is the final step in methanogenesis. In Methanothermus fervidus, this protein is Methyl-coenzyme M reductase subunit beta (mcrB).